We begin with the raw amino-acid sequence, 458 residues long: Serine--tRNA ligase (458 aa).

252–254 (TAE) provides a ligand contact to L-serine. ATP contacts are provided by residues 283–285 (RKE) and valine 299. Position 306 (glutamate 306) interacts with L-serine. 370–373 (EMVS) serves as a coordination point for ATP. Threonine 405 provides a ligand contact to L-serine.

Belongs to the class-II aminoacyl-tRNA synthetase family. Type-1 seryl-tRNA synthetase subfamily. In terms of assembly, homodimer. The tRNA molecule binds across the dimer.

Its subcellular location is the cytoplasm. It carries out the reaction tRNA(Ser) + L-serine + ATP = L-seryl-tRNA(Ser) + AMP + diphosphate + H(+). The catalysed reaction is tRNA(Sec) + L-serine + ATP = L-seryl-tRNA(Sec) + AMP + diphosphate + H(+). It participates in aminoacyl-tRNA biosynthesis; selenocysteinyl-tRNA(Sec) biosynthesis; L-seryl-tRNA(Sec) from L-serine and tRNA(Sec): step 1/1. Catalyzes the attachment of serine to tRNA(Ser). Is also able to aminoacylate tRNA(Sec) with serine, to form the misacylated tRNA L-seryl-tRNA(Sec), which will be further converted into selenocysteinyl-tRNA(Sec). The sequence is that of Serine--tRNA ligase from Sulfolobus acidocaldarius (strain ATCC 33909 / DSM 639 / JCM 8929 / NBRC 15157 / NCIMB 11770).